The chain runs to 583 residues: Epsin-2 (583 aa).

The a 1,2-diacyl-sn-glycero-3-phospho-(1D-myo-inositol-4,5-bisphosphate) site is built by Arg8, Lys11, Arg25, Asn30, Arg63, and His73. The 133-residue stretch at 12–144 (NIVNSYSEAE…KDEERLKVER (133 aa)) folds into the ENTH domain. Over residues 165 to 181 (QITFGRGSSQPNLSISH) the composition is skewed to polar residues. The segment at 165-217 (QITFGRGSSQPNLSISHSEQEYGKAGGSPASYHGSTSPRVSSELEQARPQTSG) is disordered. Position 170 is an omega-N-methylarginine (Arg170). Phosphoserine occurs at positions 173, 192, and 195. The span at 197–216 (HGSTSPRVSSELEQARPQTS) shows a compositional bias: polar residues. UIM domains are found at residues 218 to 237 (EEELQLQLALAMSREVAEQE) and 243 to 262 (GDDLRLQMALEESRRDTVKV). Disordered stretches follow at residues 293 to 384 (SGPV…KPSP) and 411 to 457 (TSKK…PESF). A run of 4 repeats spans residues 301-303 (EPW), 313-315 (NPW), 326-328 (DPW), and 340-342 (DPW). Residues 301–315 (EPWSTGTPANQTNPW) show a composition bias toward polar residues. A 6 X 3 AA repeats of [DE]-P-W region spans residues 301–377 (EPWSTGTPAN…SDAGKTADAW (77 aa)). Residues 346-355 (TTASIQSVPK) are compositionally biased toward polar residues. Repeat copies occupy residues 358 to 360 (DPW) and 375 to 377 (DAW). Ser431 carries the phosphoserine modification. Low complexity predominate over residues 437-448 (SQSLTSASSKPS). Phosphothreonine is present on Thr453. 2 consecutive repeat copies span residues 482 to 484 (NPF) and 496 to 498 (NPF). The 3 X 3 AA repeats of N-P-F stretch occupies residues 482 to 581 (NPFLAPGAAA…AQPAGTTNPF (100 aa)). Residue Ser514 is modified to Phosphoserine. Repeat unit 3 spans residues 579–581 (NPF).

This sequence belongs to the epsin family. As to quaternary structure, binds AP-2 and clathrin. Interacts with ITSN1. Interacts with UBQLN2. Binds EPS15. In terms of processing, ubiquitinated. Highly expressed in brain. Detected at lower levels in lung, liver, muscle and testis.

It is found in the cytoplasm. In terms of biological role, plays a role in the formation of clathrin-coated invaginations and endocytosis. The protein is Epsin-2 (Epn2) of Rattus norvegicus (Rat).